We begin with the raw amino-acid sequence, 144 residues long: Putative golgin subfamily A member 2B (144 aa).

Disordered stretches follow at residues 1–20 and 95–132; these read MDSEEEEEVPQPMPSIPEDL and SCGRVHRTVPEPEGSAEGGGVHQQAGPGQGRGEGEAAG. Gly residues predominate over residues 110 to 131; sequence AEGGGVHQQAGPGQGRGEGEAA.

This sequence belongs to the GOLGA2 family.

The polypeptide is Putative golgin subfamily A member 2B (GOLGA2P5) (Homo sapiens (Human)).